Reading from the N-terminus, the 742-residue chain is Probable serine/threonine-protein kinase PkwA (742 aa).

The region spanning 16 to 266 is the Protein kinase domain; that stretch reads YRLVSRLGAG…TAELLAQLST (251 aa). ATP contacts are provided by residues 22 to 30 and lysine 44; that span reads LGAGGMGQV. The active-site Proton acceptor is the aspartate 138. The tract at residues 266-394 is disordered; it reads TDHTGDDWPP…PWSPPRVQPP (129 aa). Pro residues predominate over residues 301 to 318; it reads EPPPPSHGPPRPSEPLPD. Residues 343 to 356 are compositionally biased toward basic and acidic residues; the sequence is LEEKPIQVIHEPER. A compositionally biased stretch (pro residues) spans 377–392; sequence PRPAAPQPPWSPPRVQ. 7 WD repeats span residues 455-496, 497-538, 539-580, 581-621, 622-663, 664-705, and 706-742; these read ILTT…ELHT, LEGH…ERAV, FEGH…EHAV, LKGH…KERD, VLQA…ALHT, FEGH…EHTT, and LEGH…IATE.

This sequence belongs to the protein kinase superfamily. Ser/Thr protein kinase family.

It carries out the reaction L-seryl-[protein] + ATP = O-phospho-L-seryl-[protein] + ADP + H(+). The catalysed reaction is L-threonyl-[protein] + ATP = O-phospho-L-threonyl-[protein] + ADP + H(+). Functionally, may play a regulatory role during the complex growth cycle and in secondary metabolite production. This Thermomonospora curvata protein is Probable serine/threonine-protein kinase PkwA (pkwA).